The sequence spans 567 residues: Geranylgeranyl transferase type-2 subunit alpha (567 aa).

PFTA repeat units lie at residues 44 to 78 (LDES…HLET), 88 to 122 (LVKA…RLPE), 124 to 158 (NWAR…QAAV), 159 to 193 (APAE…QLHP), 207 to 241 (VLLK…RAEP), and 363 to 397 (VLQS…ALDP). Phosphoserine is present on S98. LRR repeat units lie at residues 442 to 463 (DVRV…EQLL), 464 to 486 (LVTH…AALR), 487 to 508 (CLEV…ANLP), 509 to 530 (RLQE…QPLV), and 534 to 555 (RLVL…QERL).

This sequence belongs to the protein prenyltransferase subunit alpha family. As to quaternary structure, heterotrimer composed of RABGGTA, RABGGTB and CHM; within this trimer, RABGGTA and RABGGTB form the catalytic component B, while CHM (component A) mediates peptide substrate binding. The Rab GGTase dimer (RGGT) interacts with CHM (component A) prior to Rab protein binding; the association is stabilized by geranylgeranyl pyrophosphate (GGpp). The CHM:RGGT:Rab complex is destabilized by GGpp. Interacts with non-phosphorylated form of RAB8A; phosphorylation of RAB8A at 'Thr-72' disrupts this interaction. In terms of tissue distribution, most abundant in the heart, brain, spleen and liver. Less in the lung, muscle, kidney and testis; in these tissues less abundant than the beta subunit.

The enzyme catalyses geranylgeranyl diphosphate + L-cysteinyl-[protein] = S-geranylgeranyl-L-cysteinyl-[protein] + diphosphate. With respect to regulation, the enzymatic reaction requires the aid of a Rab escort protein (also called component A), such as CHM. Functionally, catalyzes the transfer of a geranylgeranyl moiety from geranylgeranyl diphosphate to both cysteines of Rab proteins with the C-terminal sequence -XXCC, -XCXC and -CCXX, such as RAB1A, RAB3A, RAB5A and RAB7A. In Rattus norvegicus (Rat), this protein is Geranylgeranyl transferase type-2 subunit alpha (Rabggta).